The primary structure comprises 388 residues: 1-deoxy-D-xylulose 5-phosphate reductoisomerase (388 aa).

NADPH is bound by residues Thr-10, Gly-11, Ser-12, Ile-13, Lys-37, Asn-38, and Asn-123. A 1-deoxy-D-xylulose 5-phosphate-binding site is contributed by Lys-124. Glu-125 lines the NADPH pocket. Residue Asp-149 coordinates Mn(2+). 1-deoxy-D-xylulose 5-phosphate contacts are provided by Ser-150, Glu-151, Ser-175, and His-198. Glu-151 is a Mn(2+) binding site. Gly-204 serves as a coordination point for NADPH. The 1-deoxy-D-xylulose 5-phosphate site is built by Ser-211, Asn-216, Lys-217, and Glu-220. Glu-220 is a binding site for Mn(2+).

It belongs to the DXR family. Requires Mg(2+) as cofactor. Mn(2+) is required as a cofactor.

It carries out the reaction 2-C-methyl-D-erythritol 4-phosphate + NADP(+) = 1-deoxy-D-xylulose 5-phosphate + NADPH + H(+). It functions in the pathway isoprenoid biosynthesis; isopentenyl diphosphate biosynthesis via DXP pathway; isopentenyl diphosphate from 1-deoxy-D-xylulose 5-phosphate: step 1/6. Its function is as follows. Catalyzes the NADPH-dependent rearrangement and reduction of 1-deoxy-D-xylulose-5-phosphate (DXP) to 2-C-methyl-D-erythritol 4-phosphate (MEP). In Pelagibacter ubique (strain HTCC1062), this protein is 1-deoxy-D-xylulose 5-phosphate reductoisomerase.